Here is a 2633-residue protein sequence, read N- to C-terminus: Non-reducing polyketide synthase sor2 (2633 aa).

The segment at 67 to 237 (VSNAQKLAEW…TTSTRTVAAL (171 aa)) is N-terminal acylcarrier protein transacylase domain (SAT). Cys-140 functions as the Nucleophile; for transacylase activity in the catalytic mechanism. His-258 functions as the Proton donor/acceptor; for transacylase activity in the catalytic mechanism. In terms of domain architecture, Ketosynthase family 3 (KS3) spans 389-814 (ENDIAVIGMA…GSNASVIIKQ (426 aa)). Catalysis depends on for beta-ketoacyl synthase activity residues Cys-561, His-696, and His-737. Residues 928 to 1239 (CFGGQVSTFV…SKASSQLSDV (312 aa)) form a malonyl-CoA:ACP transacylase (MAT) domain region. Residues 1307 to 1437 (PQPVGLYTLL…GQLHFQASDD (131 aa)) are N-terminal hotdog fold. In terms of domain architecture, PKS/mFAS DH spans 1307–1627 (PQPVGLYTLL…YAPVSLDQLF (321 aa)). The product template (PT) domain stretch occupies residues 1338-1509 (MSDHAIGKAQ…SNESAGRLVR (172 aa)). The tract at residues 1464 to 1627 (GRSDEVIQGQ…YAPVSLDQLF (164 aa)) is C-terminal hotdog fold. Residues 1684 to 1758 (EELWLRLRPV…GILKFLQSTL (75 aa)) form the Carrier domain. O-(pantetheine 4'-phosphoryl)serine is present on Ser-1718. The disordered stretch occupies residues 1762–1792 (DVHDSSETMSTVSSDGNVHSPPTSGSEMASP). Polar residues predominate over residues 1768-1790 (ETMSTVSSDGNVHSPPTSGSEMA). Positions 1982–2166 (FELMADFLTR…ASGFKHVRWT (185 aa)) are methyltransferase domain. Residues 2253–2495 (VTGATGSLGS…TLRALPDVDG (243 aa)) are NADPH-binding (R) domain.

The cofactor is pantetheine 4'-phosphate.

It functions in the pathway secondary metabolite biosynthesis. Functionally, non-reducing polyketide synthase; part of the SOR gene cluster that mediates the biosynthesis of sorbicillinoids, a diverse group of yellow secondary metabolites that restrict growth of competing pathogenic fungi but not of bacteria. Sorbicillinoids biosynthesis requires the action of two PKSs. The SOR cluster is required for the production of trichodimerol and dihydrotrichotetronin, with sor2 being sufficient for production of trichodimerol, but not dihydrotrichotetronin in the light. Sor1 iteratively combines three acetyl units and the growing chain is modified by the ketoacyl reductase subunit, and optional by the enoyl reductase subunit in the second cycle. The polyketide is then handed over to the PKS sor2, which adds three more acetyl units, and two methyl groups. Sor2 releases an aldehyde, which undergoes spontaneous cyclization resulting in the formation of sorbicillin or 2',3'-dihydrosorbicillin. The monooxygenase sor5 oxidizes sorbicillin and 2',3'-dihydrosorbicillin to 2',3'-dihydrosorbicillinol and sorbicillinol, respectively. The oxidoreductase sor8 further converts sorbicillinol into oxosorbicillinol. Sorbicillinol is the building block for the other sorbicillinoids such as disorbicillinol, bisvertinolon, dihydrobisvertinolone, and dihydrotrichotetronine. This Hypocrea jecorina (strain QM6a) (Trichoderma reesei) protein is Non-reducing polyketide synthase sor2.